The chain runs to 451 residues: Trigger factor (451 aa).

The region spanning 165–250 (DDKLTIDFEG…LRQIQVREAL (86 aa)) is the PPIase FKBP-type domain.

Belongs to the FKBP-type PPIase family. Tig subfamily.

It localises to the cytoplasm. The enzyme catalyses [protein]-peptidylproline (omega=180) = [protein]-peptidylproline (omega=0). Functionally, involved in protein export. Acts as a chaperone by maintaining the newly synthesized protein in an open conformation. Functions as a peptidyl-prolyl cis-trans isomerase. The polypeptide is Trigger factor (tig) (Helicobacter pylori (strain J99 / ATCC 700824) (Campylobacter pylori J99)).